Reading from the N-terminus, the 286-residue chain is Protease HtpX (286 aa).

Helical transmembrane passes span 4-24 (ILLF…ILSL) and 33-53 (TGLL…SLFL). Residue histidine 139 coordinates Zn(2+). Glutamate 140 is a catalytic residue. Histidine 143 contributes to the Zn(2+) binding site. 2 helical membrane-spanning segments follow: residues 147–167 (GDMV…IFVS) and 186–206 (IYFL…SMIA). Position 214 (glutamate 214) interacts with Zn(2+).

It belongs to the peptidase M48B family. Zn(2+) serves as cofactor.

It localises to the cell inner membrane. This Pasteurella multocida (strain Pm70) protein is Protease HtpX.